Consider the following 70-residue polypeptide: Biotin carboxyl carrier protein of acetyl-CoA carboxylase (70 aa).

In terms of domain architecture, Biotinyl-binding spans 1–69; it reads GTVVAPMVGL…QDGIKLFALK (69 aa). The residue at position 35 (lysine 35) is an N6-biotinyllysine.

It localises to the plastid. Its subcellular location is the chloroplast. The protein operates within lipid metabolism; fatty acid biosynthesis. Functionally, this protein is a component of the acetyl coenzyme A carboxylase complex; first, biotin carboxylase catalyzes the carboxylation of the carrier protein and then the transcarboxylase transfers the carboxyl group to form malonyl-CoA. This is Biotin carboxyl carrier protein of acetyl-CoA carboxylase from Solanum lycopersicum (Tomato).